Here is a 243-residue protein sequence, read N- to C-terminus: Small ribosomal subunit protein uS3 (243 aa).

A KH type-2 domain is found at 39-107 (MRKFVMSELK…ETHLNIVEVR (69 aa)). A disordered region spans residues 214 to 243 (ASERRAMEGDAQGPASRDRDRDRDRRRDNA). The segment covering 229–243 (SRDRDRDRDRRRDNA) has biased composition (basic and acidic residues).

This sequence belongs to the universal ribosomal protein uS3 family. As to quaternary structure, part of the 30S ribosomal subunit. Forms a tight complex with proteins S10 and S14.

Its function is as follows. Binds the lower part of the 30S subunit head. Binds mRNA in the 70S ribosome, positioning it for translation. In Rhizobium johnstonii (strain DSM 114642 / LMG 32736 / 3841) (Rhizobium leguminosarum bv. viciae), this protein is Small ribosomal subunit protein uS3.